Consider the following 329-residue polypeptide: U5 small nuclear ribonucleoprotein TSSC4 (329 aa).

Disordered stretches follow at residues 1–88 and 104–156; these read MAEA…MSST and ARRA…PDYV. Residues 22-41 are compositionally biased toward low complexity; sequence DTLPSDTVSLSDSDSDLSLP. Phosphoserine occurs at positions 60, 67, 86, 132, 143, and 146. The hom2; mediates interaction with the U5 snRNP complexes and required for spliceosomal tri-snRNP complex assembly stretch occupies residues 77–104; it reads VQPFHLRGMSSTFSQRSRDIFDCLEGAA. Residues 149 to 316 form an interaction with SNRNP200 region; the sequence is VPPVPDYVAH…SRKRSRDHFR (168 aa). Positions 150-186 are hom3; mediates interaction with the U5 snRNP complexes; that stretch reads PPVPDYVAHPERWTKYSLEDVTEVSEQSNQATALAFL. Residues 201–250 form a hom4; necessary for interaction with the PRPF19 complex and required for spliceosomal tri-snRNP complex assembly region; it reads FNQDPSSCGEGRVIFTKPVRGVEARHERKRVLGKVGEPGRGGLGNPATDR. Lysine 217 bears the N6-acetyllysine mark. The tract at residues 221-329 is disordered; sequence GVEARHERKR…SSPEDPGAEV (109 aa). Serine 265 is modified (phosphoserine). A compositionally biased stretch (basic residues) spans 306–317; the sequence is GSRKRSRDHFRN. Serine 321 bears the Phosphoserine mark.

It belongs to the TSSC4 family. As to quaternary structure, interacts in a RNA-independent manner with distinct U5 snRNP-containing complexes, the mono-U5 snRNP and the post-splicing U5 snRNP-PRPF19 complex. Interacts with SNRNP200; the interaction is direct, excludes recruitment of C9ORF78 and WBP4 to SNRNP200 and negatively regulates its RNA helicase activity. Interacts with PRPF8; the interaction is direct. Expressed in fetal brain, lung, liver and kidney. Widely expressed in adult tissues.

It is found in the nucleus. It localises to the cytoplasm. Protein associated with the U5 snRNP, during its maturation and its post-splicing recycling and which is required for spliceosomal tri-snRNP complex assembly in the nucleus. Has a molecular sequestering activity and transiently hinders SNRNP200 binding sites for constitutive splicing factors that intervene later during the assembly of the spliceosome and splicing. Together with its molecular sequestering activity, may also function as a molecular adapter and placeholder, coordinating the assembly of the U5 snRNP and its association with the U4/U6 di-snRNP. This chain is U5 small nuclear ribonucleoprotein TSSC4, found in Homo sapiens (Human).